A 327-amino-acid polypeptide reads, in one-letter code: Arabinose 5-phosphate isomerase KpsF (327 aa).

One can recognise an SIS domain in the interval 48–191 (VLNLIMNCKG…AIAMIHQRKF (144 aa)). 63–68 (GMGKSG) lines the ATP pocket. Substrate-binding positions include 82–83 (GT), His89, His95, 121–130 (KLVPSLKNFG), and 155–157 (HMA). Residue His89 participates in Zn(2+) binding. 2 consecutive CBS domains span residues 217–273 (MQHD…EGSL) and 282–327 (MTRE…RIFD).

Homotetramer.

It carries out the reaction D-arabinose 5-phosphate = D-ribulose 5-phosphate. With respect to regulation, inhibited by 10 uM zinc, cadmium or mercury ions. Functionally, involved in the biosynthesis of K-antigen capsules. Catalyzes the reversible aldol-ketol isomerization between D-ribulose 5-phosphate (Ru5P) and D-arabinose 5-phosphate (A5P). The sequence is that of Arabinose 5-phosphate isomerase KpsF from Escherichia coli O6:H1 (strain CFT073 / ATCC 700928 / UPEC).